The primary structure comprises 106 residues: UPF0145 protein CPF_0876 (106 aa).

This sequence belongs to the UPF0145 family.

In Clostridium perfringens (strain ATCC 13124 / DSM 756 / JCM 1290 / NCIMB 6125 / NCTC 8237 / Type A), this protein is UPF0145 protein CPF_0876.